The primary structure comprises 423 residues: UDP-N-acetylglucosamine 1-carboxyvinyltransferase (423 aa).

Residue 22–23 (KN) participates in phosphoenolpyruvate binding. Arg93 lines the UDP-N-acetyl-alpha-D-glucosamine pocket. The active-site Proton donor is the Cys117. 2-(S-cysteinyl)pyruvic acid O-phosphothioketal is present on Cys117. Residues 122-126 (RPVDL), Asp308, and Val330 each bind UDP-N-acetyl-alpha-D-glucosamine.

Belongs to the EPSP synthase family. MurA subfamily.

It localises to the cytoplasm. The catalysed reaction is phosphoenolpyruvate + UDP-N-acetyl-alpha-D-glucosamine = UDP-N-acetyl-3-O-(1-carboxyvinyl)-alpha-D-glucosamine + phosphate. It participates in cell wall biogenesis; peptidoglycan biosynthesis. Functionally, cell wall formation. Adds enolpyruvyl to UDP-N-acetylglucosamine. The polypeptide is UDP-N-acetylglucosamine 1-carboxyvinyltransferase (Finegoldia magna (strain ATCC 29328 / DSM 20472 / WAL 2508) (Peptostreptococcus magnus)).